The sequence spans 1088 residues: Protocadherin-19 (1088 aa).

The N-terminal stretch at 1–24 (MHSKDMDFVQMFVCFLLCWTGVDA) is a signal peptide. The Extracellular segment spans residues 25–678 (VFNLKYTVEE…QEQIGPVNLS (654 aa)). Cadherin domains follow at residues 31–130 (TVEE…APRF), 131–239 (PTNH…NPVF), 240–347 (DEPV…APEI), 351–454 (SENS…PPYF), 455–563 (TKPH…TPVM), and 569–676 (VNGT…GPVN). Positions 34 and 35 each coordinate Ca(2+). N-linked (GlcNAc...) asparagine glycosylation occurs at asparagine 44. Positions 89 and 91 each coordinate Ca(2+). A disulfide bridge links cysteine 94 with cysteine 100. The Ca(2+) site is built by aspartate 122, valine 123, asparagine 124, aspartate 125, asparagine 126, glutamate 141, aspartate 156, aspartate 158, asparagine 162, glutamate 200, aspartate 213, aspartate 231, serine 232, asparagine 233, aspartate 234, asparagine 235, and glutamate 250. N-linked (GlcNAc...) asparagine glycosylation occurs at asparagine 262. Residues aspartate 265, aspartate 267, and asparagine 271 each coordinate Ca(2+). Asparagine 284 is a glycosylation site (N-linked (GlcNAc...) asparagine). Positions 306, 308, 339, 340, 341, 342, 343, 361, and 376 each coordinate Ca(2+). N-linked (GlcNAc...) asparagine glycosylation occurs at asparagine 377. Residues aspartate 378, asparagine 382, aspartate 413, and glutamate 415 each coordinate Ca(2+). Residue asparagine 421 is glycosylated (N-linked (GlcNAc...) asparagine). Ca(2+)-binding residues include aspartate 428, aspartate 446, glutamate 447, asparagine 448, aspartate 449, asparagine 450, glutamate 465, aspartate 480, aspartate 482, asparagine 486, asparagine 522, glutamate 524, and aspartate 537. Residue asparagine 486 is glycosylated (N-linked (GlcNAc...) asparagine). N-linked (GlcNAc...) asparagine glycosylation occurs at asparagine 546. Ca(2+)-binding residues include aspartate 555, valine 556, asparagine 557, aspartate 558, and asparagine 559. Asparagine 570 carries an N-linked (GlcNAc...) asparagine glycan. Residues aspartate 594, aspartate 596, asparagine 600, and aspartate 646 each contribute to the Ca(2+) site. An N-linked (GlcNAc...) asparagine glycan is attached at asparagine 676. Residues 679-699 (LIFIIALGSIAVILFVTMIFV) form a helical membrane-spanning segment. At 700–1088 (AVKCKRDNKE…GSKRLKDIVL (389 aa)) the chain is on the cytoplasmic side. Disordered stretches follow at residues 792–813 (NSRNAAPNHGYHHTFTGQGPQQ), 851–875 (DMEGNSLKDSGHEESDQTDSEHDVQ), 970–1032 (TFGK…ASST), and 1067–1088 (TLLQDGRDKESPGSKRLKDIVL). The span at 859 to 875 (DSGHEESDQTDSEHDVQ) shows a compositional bias: basic and acidic residues. Basic and acidic residues predominate over residues 1071–1088 (DGRDKESPGSKRLKDIVL).

As to quaternary structure, homodimer; antiparallel. Interacts with cadherin cdh2; the interaction confers robust cell adhesion activity on pcdh19. In the embryo, strongly expressed in the developing nervous system. At 12 hours post fertilization (hpf), shows a segmental expression pattern in the anterior third of the neural keel with strong expression in the presumptive forebrain, cerebellum/rhombomere 1 and rhombomere 4. By 24 hpf, expressed widely in the brain and spinal cord with higher expression levels in the ventral telencephalon, dorsal and central thalamus, optic tectum, central tegmentum, cerebellum and dorsolateral regions of the hindbrain. As development proceeds, expression becomes restricted to the dorsal and/or lateral regions of the central nervous system. Not detected in the spinal cord of two- and three-day old embryos. Expressed in the eye primordium, developing retina, lens and otic vesicle. Expressed in the larval optic tectum at 4 days post-fertilization where it localizes in discrete columns of neurons. Expressed throughout the adult brain with strong expression in the ventromedial telencephalon, periventricular regions of the thalamus and anterior hypothalamus, stratum periventriculare of the optic tectum, dorsal tegmental nucleus, granular regions of the cerebellar body and valvula, and superficial layers of the facial and vagal lobes.

It localises to the cell membrane. Calcium-dependent cell-adhesion protein. Essential for the early stages of neurulation in the anterior neural plate. Shows little cell adhesion activity on its own but exhibits robust homophilic cell adhesion when in a complex with cadherin cdh2 and appears to mediate the adhesion while cdh2 acts as a cell adhesion cofactor in the complex. Functions with cdh2 to coordinate cell adhesion and cell movements during neurulation. Contributes to neural progenitor cell patterning with cdh2 by promoting homophilic cell interactions. Regulates the columnar organization of neurons in the optic tectum. This Danio rerio (Zebrafish) protein is Protocadherin-19.